Reading from the N-terminus, the 281-residue chain is Bifunctional protein FolD (281 aa).

NADP(+)-binding positions include 161–163 (GRS), Ser-186, and Ile-227.

Belongs to the tetrahydrofolate dehydrogenase/cyclohydrolase family. Homodimer.

It catalyses the reaction (6R)-5,10-methylene-5,6,7,8-tetrahydrofolate + NADP(+) = (6R)-5,10-methenyltetrahydrofolate + NADPH. The catalysed reaction is (6R)-5,10-methenyltetrahydrofolate + H2O = (6R)-10-formyltetrahydrofolate + H(+). The protein operates within one-carbon metabolism; tetrahydrofolate interconversion. In terms of biological role, catalyzes the oxidation of 5,10-methylenetetrahydrofolate to 5,10-methenyltetrahydrofolate and then the hydrolysis of 5,10-methenyltetrahydrofolate to 10-formyltetrahydrofolate. The sequence is that of Bifunctional protein FolD from Brachyspira hyodysenteriae (strain ATCC 49526 / WA1).